The sequence spans 189 residues: Mediator of RNA polymerase II transcription subunit 28 (189 aa).

The stretch at 75–115 (YMLIKDENQDLSIEIQRKEALLQKHYNRLEEWKACLSDIQQ) forms a coiled coil. The segment at 124-147 (PIGSGMLQGPGGGMPPMGGTPPRP) is disordered. The span at 129–139 (MLQGPGGGMPP) shows a compositional bias: gly residues.

It belongs to the Mediator complex subunit 28 family. Component of the Mediator complex, which includes at least CDK8, MED4, MED6, MED11, MED14, MED17, MED18, MED20, MED21, MED22, MED27, MED28, MED30 and MED31.

It is found in the nucleus. Functionally, component of the Mediator complex, a coactivator involved in the regulated transcription of nearly all RNA polymerase II-dependent genes. Mediator functions as a bridge to convey information from gene-specific regulatory proteins to the basal RNA polymerase II transcription machinery. Mediator is recruited to promoters by direct interactions with regulatory proteins and serves as a scaffold for the assembly of a functional preinitiation complex with RNA polymerase II and the general transcription factors. The polypeptide is Mediator of RNA polymerase II transcription subunit 28 (MED28) (Drosophila melanogaster (Fruit fly)).